Here is a 532-residue protein sequence, read N- to C-terminus: Beta-hexosaminidase subunit A1 (532 aa).

Residues 1-18 (MIKKIILFFAVLIAIVIG) form the signal peptide. 2 N-linked (GlcNAc...) asparagine glycosylation sites follow: Asn72 and Asn79. The active-site Proton donor is the Glu308. 2 N-linked (GlcNAc...) asparagine glycosylation sites follow: Asn350 and Asn427.

It belongs to the glycosyl hydrolase 20 family. Dimer. The N-terminus is blocked. In terms of processing, N-glycosylated.

It is found in the lysosome. The catalysed reaction is Hydrolysis of terminal non-reducing N-acetyl-D-hexosamine residues in N-acetyl-beta-D-hexosaminides.. Functionally, responsible for the degradation of GM2 gangliosides, and a variety of other molecules containing terminal N-acetyl hexosamines. This enzyme plays a role during the slug stage of development in the maintenance of pseudoplasmodia of normal size. The sequence is that of Beta-hexosaminidase subunit A1 (hexa1) from Dictyostelium discoideum (Social amoeba).